The primary structure comprises 176 residues: Glutamyl-tRNA(Gln) amidotransferase subunit F, mitochondrial (176 aa).

It belongs to the GatF family. As to quaternary structure, subunit of the heterotrimeric GatFAB amidotransferase (AdT) complex, composed of A, B and F subunits.

The protein resides in the mitochondrion inner membrane. The enzyme catalyses L-glutamyl-tRNA(Gln) + L-glutamine + ATP + H2O = L-glutaminyl-tRNA(Gln) + L-glutamate + ADP + phosphate + H(+). Allows the formation of correctly charged Gln-tRNA(Gln) through the transamidation of misacylated Glu-tRNA(Gln) in the mitochondria. The reaction takes place in the presence of glutamine and ATP through an activated gamma-phospho-Glu-tRNA(Gln). Required for proper protein synthesis within the mitochondrion. This is Glutamyl-tRNA(Gln) amidotransferase subunit F, mitochondrial from Yarrowia lipolytica (strain CLIB 122 / E 150) (Yeast).